The chain runs to 344 residues: Dihydroorotase (344 aa).

Zn(2+)-binding residues include H14 and H16. Residues H16–R18 and N42 contribute to the substrate site. Positions 100, 137, and 175 each coordinate Zn(2+). K100 is subject to N6-carboxylysine. Substrate is bound at residue H137. L220 lines the substrate pocket. D248 contacts Zn(2+). D248 is an active-site residue. Residues H252 and A264 each coordinate substrate.

This sequence belongs to the metallo-dependent hydrolases superfamily. DHOase family. Class II DHOase subfamily. Homodimer. Requires Zn(2+) as cofactor.

It carries out the reaction (S)-dihydroorotate + H2O = N-carbamoyl-L-aspartate + H(+). The protein operates within pyrimidine metabolism; UMP biosynthesis via de novo pathway; (S)-dihydroorotate from bicarbonate: step 3/3. In terms of biological role, catalyzes the reversible cyclization of carbamoyl aspartate to dihydroorotate. The polypeptide is Dihydroorotase (Ralstonia pickettii (strain 12J)).